A 405-amino-acid chain; its full sequence is Glucose-1-phosphate adenylyltransferase (405 aa).

Residues Tyr99, Gly164, 179 to 180 (EK), and Ser197 contribute to the alpha-D-glucose 1-phosphate site.

The protein belongs to the bacterial/plant glucose-1-phosphate adenylyltransferase family. As to quaternary structure, homotetramer.

The catalysed reaction is alpha-D-glucose 1-phosphate + ATP + H(+) = ADP-alpha-D-glucose + diphosphate. It participates in glycan biosynthesis; glycogen biosynthesis. Its function is as follows. Involved in the biosynthesis of ADP-glucose, a building block required for the elongation reactions to produce glycogen. Catalyzes the reaction between ATP and alpha-D-glucose 1-phosphate (G1P) to produce pyrophosphate and ADP-Glc. This is Glucose-1-phosphate adenylyltransferase from Corynebacterium aurimucosum (strain ATCC 700975 / DSM 44827 / CIP 107346 / CN-1) (Corynebacterium nigricans).